A 216-amino-acid chain; its full sequence is V-type ATP synthase subunit D (216 aa).

It belongs to the V-ATPase D subunit family.

Functionally, produces ATP from ADP in the presence of a proton gradient across the membrane. The chain is V-type ATP synthase subunit D from Clostridium botulinum (strain Loch Maree / Type A3).